The sequence spans 245 residues: Orotidine 5'-phosphate decarboxylase (245 aa).

Residues Asp-22, Lys-44, 71–80, Thr-131, Arg-192, Gln-201, Gly-221, and Arg-222 each bind substrate; that span reads DLKFHDIPNT. The Proton donor role is filled by Lys-73.

This sequence belongs to the OMP decarboxylase family. Type 1 subfamily. In terms of assembly, homodimer.

The catalysed reaction is orotidine 5'-phosphate + H(+) = UMP + CO2. The protein operates within pyrimidine metabolism; UMP biosynthesis via de novo pathway; UMP from orotate: step 2/2. In terms of biological role, catalyzes the decarboxylation of orotidine 5'-monophosphate (OMP) to uridine 5'-monophosphate (UMP). This chain is Orotidine 5'-phosphate decarboxylase, found in Escherichia coli O139:H28 (strain E24377A / ETEC).